The chain runs to 357 residues: Probable RNA methyltransferase Daro_1157 (357 aa).

Glutamate 91 acts as the Proton acceptor in catalysis. The Radical SAM core domain maps to 94-320 (LLPRDGLCIS…TTVRNSAGQD (227 aa)). Cysteine 101 and cysteine 325 are disulfide-bonded. Positions 108, 112, and 115 each coordinate [4Fe-4S] cluster. S-adenosyl-L-methionine contacts are provided by residues 153–154 (GE), serine 183, 206–208 (SLH), and asparagine 282. The S-methylcysteine intermediate role is filled by cysteine 325.

Belongs to the radical SAM superfamily. RlmN family. [4Fe-4S] cluster is required as a cofactor.

The protein resides in the cytoplasm. The sequence is that of Probable RNA methyltransferase Daro_1157 from Dechloromonas aromatica (strain RCB).